The chain runs to 153 residues: Aspartate carbamoyltransferase regulatory chain (153 aa).

Residues Cys108, Cys113, Cys137, and Cys140 each coordinate Zn(2+).

It belongs to the PyrI family. In terms of assembly, contains catalytic and regulatory chains. Requires Zn(2+) as cofactor.

Involved in allosteric regulation of aspartate carbamoyltransferase. The protein is Aspartate carbamoyltransferase regulatory chain of Methanosphaera stadtmanae (strain ATCC 43021 / DSM 3091 / JCM 11832 / MCB-3).